The following is a 403-amino-acid chain: TPR repeat-containing protein Synpcc7942_0270 (403 aa).

5 TPR repeats span residues 208–243, 244–282, 283–316, 317–350, and 351–387; these read AYLCSKLGGLLVQEGDLKAAQRWLKQGLKQGRPEPA, VRYELLYHLALLERRQGDLDAAIDRYQAALQEPVDAIHK, LGAWVNLSHLYRDRGQLGLAYDAARQAVAAAPQA, TVALTALGLAARAIGNYPEAIAAYQQALQLDPND, and PSLYQNLGAVLFQVGQLEASYAAFRQAIAGYEQQGSP.

The protein is TPR repeat-containing protein Synpcc7942_0270 of Synechococcus elongatus (strain ATCC 33912 / PCC 7942 / FACHB-805) (Anacystis nidulans R2).